The sequence spans 308 residues: tRNA dimethylallyltransferase (308 aa).

11–18 (GPTGIGKT) is a binding site for ATP. 13-18 (TGIGKT) lines the substrate pocket. The segment at 36–39 (DSMQ) is interaction with substrate tRNA.

This sequence belongs to the IPP transferase family. Monomer. Mg(2+) is required as a cofactor.

The catalysed reaction is adenosine(37) in tRNA + dimethylallyl diphosphate = N(6)-dimethylallyladenosine(37) in tRNA + diphosphate. Catalyzes the transfer of a dimethylallyl group onto the adenine at position 37 in tRNAs that read codons beginning with uridine, leading to the formation of N6-(dimethylallyl)adenosine (i(6)A). The protein is tRNA dimethylallyltransferase of Lactobacillus gasseri (strain ATCC 33323 / DSM 20243 / BCRC 14619 / CIP 102991 / JCM 1131 / KCTC 3163 / NCIMB 11718 / NCTC 13722 / AM63).